The primary structure comprises 547 residues: Chaperonin GroEL (547 aa).

ATP contacts are provided by residues 30–33 (TLGP), Lys51, 87–91 (DGTTT), Gly415, and Asp495. The disordered stretch occupies residues 526–547 (KKESAGGGGMPGGMGGMGGMDF). Over residues 530-547 (AGGGGMPGGMGGMGGMDF) the composition is skewed to gly residues.

The protein belongs to the chaperonin (HSP60) family. As to quaternary structure, forms a cylinder of 14 subunits composed of two heptameric rings stacked back-to-back. Interacts with the co-chaperonin GroES.

Its subcellular location is the cytoplasm. The enzyme catalyses ATP + H2O + a folded polypeptide = ADP + phosphate + an unfolded polypeptide.. In terms of biological role, together with its co-chaperonin GroES, plays an essential role in assisting protein folding. The GroEL-GroES system forms a nano-cage that allows encapsulation of the non-native substrate proteins and provides a physical environment optimized to promote and accelerate protein folding. The sequence is that of Chaperonin GroEL from Hyphomonas neptunium (strain ATCC 15444).